The chain runs to 280 residues: GTP-binding protein rhoC (280 aa).

The interval 13 to 59 (TSRRHSLVTPPPSVAPRQNRMRSQSVRVSNGTVSTDNSMSSGRVSEA) is disordered. The span at 33-59 (MRSQSVRVSNGTVSTDNSMSSGRVSEA) shows a compositional bias: polar residues. 76-83 (GDGGCGKT) is a binding site for GTP. The Effector region signature appears at 98 to 106 (YVPTVFENY). GTP contacts are provided by residues 125 to 129 (DTAGQ) and 183 to 186 (LKSD). The disordered stretch occupies residues 251–275 (WDTRLPSSSGKPGGKPIGGKKIKKR). At Cys277 the chain carries Cysteine methyl ester. Cys277 carries the S-geranylgeranyl cysteine lipid modification. A propeptide spans 278 to 280 (KIL) (removed in mature form).

This sequence belongs to the small GTPase superfamily. Rho family.

Its subcellular location is the cell membrane. This Emericella nidulans (strain FGSC A4 / ATCC 38163 / CBS 112.46 / NRRL 194 / M139) (Aspergillus nidulans) protein is GTP-binding protein rhoC (rhoC).